Consider the following 214-residue polypeptide: Somatotropin-A (214 aa).

The first 25 residues, 1–25 (MATGFCSSFGLLVVLLLKNVADVGA), serve as a signal peptide directing secretion. 2 disulfides stabilise this stretch: Cys-77–Cys-187 and Cys-204–Cys-212.

The protein belongs to the somatotropin/prolactin family.

The protein resides in the secreted. In terms of biological role, growth hormone plays an important role in growth control. This is Somatotropin-A (gh-a) from Xenopus laevis (African clawed frog).